The chain runs to 461 residues: Ribulose bisphosphate carboxylase (461 aa).

Asn-112 contacts substrate. Lys-167 functions as the Proton acceptor in the catalytic mechanism. Lys-169 contributes to the substrate binding site. Residues Lys-192, Asp-194, and Glu-195 each coordinate Mg(2+). An N6-carboxylysine modification is found at Lys-192. The active-site Proton acceptor is the His-288. Residues Arg-289, His-322, and Ser-369 each contribute to the substrate site.

Belongs to the RuBisCO large chain family. Type II subfamily. Homodimer. Requires Mg(2+) as cofactor.

The enzyme catalyses 2 (2R)-3-phosphoglycerate + 2 H(+) = D-ribulose 1,5-bisphosphate + CO2 + H2O. It catalyses the reaction D-ribulose 1,5-bisphosphate + O2 = 2-phosphoglycolate + (2R)-3-phosphoglycerate + 2 H(+). In terms of biological role, ruBisCO catalyzes two reactions: the carboxylation of D-ribulose 1,5-bisphosphate, the primary event in carbon dioxide fixation, as well as the oxidative fragmentation of the pentose substrate. Both reactions occur simultaneously and in competition at the same active site. The sequence is that of Ribulose bisphosphate carboxylase from Rhodopseudomonas palustris (strain BisB5).